A 168-amino-acid polypeptide reads, in one-letter code: MNSKGQYPTQPTYPVQPPGNPVYPQTLHLPQAPPYTDAPPAYSELYRPSFVHPGAATVPTMSAAFPGASLYLPMAQSVAVGPLGSTIPMAYYPVGPIYPPGSAVLVEGGYDAGARFGAGATTGSIPPPPPGCPPNAAQLAVMQGANVLVTQRKGNFFMGGSDGGYTIW.

Positions 1 to 13 (MNSKGQYPTQPTY) are enriched in low complexity. Residues 1-25 (MNSKGQYPTQPTYPVQPPGNPVYPQ) are disordered. The PPAY motif lies at 39 to 42 (PPAY). Serine 77 is subject to Phosphoserine.

As to quaternary structure, interacts with SOX6. Interacts with DAZ1 and DAZL. Interacts with IL17RB. May interact with FAM168B. Interacts with INCA1. Interacts with EIF4G1 and EIF4G2. Interacts (via PPAY motif) with NEDD4 (via WW domains). Interacts with transcription factor TCF4; the interaction results in localization of DAZAP2 to the nucleus. Interacts with transcription factors TCF7 and TCF7L1. Interacts with transcription factor LEF1. Interacts with serine/threonine-protein kinase HIPK2; the interaction results in phosphorylation of DAZAP2 which causes localization of DAZAP2 to the nucleus, reduces interaction of DAZAP2 with HIPK2 and prevents DAZAP2-dependent degradation of HIPK2. Interacts with ubiquitin ligase SIAH1; the interaction is decreased following phosphorylation of DAZAP2 by HIPK2. Interacts with TP53; the interaction is triggered by DNA damage. Post-translationally, ubiquitinated by SMURF2, leading to proteasomal degradation. Ubiquitinated by NEDD4, leading to proteasomal degradation. In terms of processing, following DNA damage, phosphorylated by HIPK2 which promotes DAZAP2 localization to the nucleus, reduces interaction of DAZAP2 with HIPK2 and SIAH1, and prevents DAZAP2-dependent ubiquitination of HIPK2 by E3 ubiquitin-protein ligase SIAH1 and subsequent HIPK2 proteasomal degradation.

The protein localises to the cytoplasm. It is found in the nucleus. The protein resides in the nucleus speckle. It localises to the nuclear body. Its subcellular location is the stress granule. In terms of biological role, in unstressed cells, promotes SIAH1-mediated polyubiquitination and degradation of the serine/threonine-protein kinase HIPK2, probably by acting as a loading factor that potentiates complex formation between HIPK2 and ubiquitin ligase SIAH1. In response to DNA damage, localizes to the nucleus following phosphorylation by HIPK2 and modulates the expression of a subset of TP53/p53 target genes by binding to TP53 at target gene promoters. This limits the expression of a number of cell death-mediating TP53 target genes, reducing DNA damage-induced cell death. Enhances the binding of transcription factor TCF7L2/TCF4, a Wnt signaling pathway effector, to the promoters of target genes. Plays a role in stress granule formation. The sequence is that of DAZ-associated protein 2 from Rattus norvegicus (Rat).